The following is a 141-amino-acid chain: Large ribosomal subunit protein uL16 (141 aa).

The protein belongs to the universal ribosomal protein uL16 family. As to quaternary structure, part of the 50S ribosomal subunit.

Its function is as follows. Binds 23S rRNA and is also seen to make contacts with the A and possibly P site tRNAs. This is Large ribosomal subunit protein uL16 from Campylobacter jejuni subsp. jejuni serotype O:6 (strain 81116 / NCTC 11828).